A 71-amino-acid chain; its full sequence is Sec-independent protein translocase protein TatA (71 aa).

A helical membrane pass occupies residues 9 to 29 (LLLILAIVVILFGASRLPALG). Residues 43–71 (FGGEDEKPTASGNGSTPTQSSSDQGSKQA) are disordered. Residues 52–71 (ASGNGSTPTQSSSDQGSKQA) show a composition bias toward polar residues.

This sequence belongs to the TatA/E family. In terms of assembly, the Tat system comprises two distinct complexes: a TatABC complex, containing multiple copies of TatA, TatB and TatC subunits, and a separate TatA complex, containing only TatA subunits. Substrates initially bind to the TatABC complex, which probably triggers association of the separate TatA complex to form the active translocon.

It localises to the cell inner membrane. Part of the twin-arginine translocation (Tat) system that transports large folded proteins containing a characteristic twin-arginine motif in their signal peptide across membranes. TatA could form the protein-conducting channel of the Tat system. The polypeptide is Sec-independent protein translocase protein TatA (Anaeromyxobacter dehalogenans (strain 2CP-C)).